We begin with the raw amino-acid sequence, 371 residues long: MTTSPYPIETPFKVCIVGSGNWGTAVAKLVAENCAEKPNIFQRDVKMWVFEEEIEGRKLTEIINTEHENVKYLPEIKLPTNLVANPDIVDTVQDADLIVFNIPHQFLGRIVKQIEGKVKPTARAISCLKGLDVSPEGCKLLSTSITDTLKIYCGVLSGANIANEVAKGNWSETSIAYTVPEDFRGAGKDIDPFILKEAFHRPYFHVRVIEDVVGASIAGALKNVIACSVGFVEGAGWGDNAKAAIMRIGIKETIRFASYWELFKIKALSPPNPKTFTEESAGVADLITTCSGGRNVKVARYMIKNNVDAFEAEKIVLKGQSSQGILTAKEVHELLTNFNLQDEFPLLEATYKVIYENGSVDDFPQLLEGDQ.

NAD(+)-binding positions include 18–23 (GSGNWG), Phe50, and Phe106. Lys129 contributes to the substrate binding site. Ala162 contributes to the NAD(+) binding site. Lys222 (proton acceptor) is an active-site residue. NAD(+) is bound by residues Arg294 and Gln323. 294–295 (RN) lines the substrate pocket.

Belongs to the NAD-dependent glycerol-3-phosphate dehydrogenase family. As to quaternary structure, interacts with human CFH/complement factor H; the interaction is direct and enables the pathogen to evade the host innate immune system. Interacts with human CFHR1/complement factor H-related protein 1; the interaction is direct. Interacts with human PLG/plasminogen; the interaction is direct and provides active plasmin on the surface of fungal cells.

The protein resides in the secreted. Its subcellular location is the cell wall. The protein localises to the cytoplasm. It localises to the peroxisome. It catalyses the reaction sn-glycerol 3-phosphate + NAD(+) = dihydroxyacetone phosphate + NADH + H(+). Functionally, may catalyze the production and accumulation of glycerol during hyperosmotic stress conditions. Glycerol acts as a osmoregulator that prevents loss of water and turgor of the cells. Mediates evasion of the host innate immune system by binding inhibitory components of the host alternative complement system, in a manner dependent on estrogen-induced inhibition of EBP1. This is Glycerol-3-phosphate dehydrogenase [NAD(+)] 2 from Candida albicans (strain SC5314 / ATCC MYA-2876) (Yeast).